The primary structure comprises 345 residues: Magnesium-chelatase 38 kDa subunit (345 aa).

ATP is bound at residue 35 to 42; sequence GDRGTGKS.

It belongs to the Mg-chelatase subunits D/I family.

The catalysed reaction is protoporphyrin IX + Mg(2+) + ATP + H2O = Mg-protoporphyrin IX + ADP + phosphate + 3 H(+). It functions in the pathway porphyrin-containing compound metabolism; bacteriochlorophyll biosynthesis. In terms of biological role, involved in bacteriochlorophyll biosynthesis; introduces a magnesium ion into protoporphyrin IX to yield Mg-protoporphyrin IX. The chain is Magnesium-chelatase 38 kDa subunit (bchI) from Acidiphilium rubrum.